The sequence spans 219 residues: Chalcone--flavanone isomerase (219 aa).

The substrate site is built by Thr-50, Asn-115, and Ser-192.

It belongs to the chalcone isomerase family.

It catalyses the reaction a chalcone = a flavanone.. It participates in secondary metabolite biosynthesis; flavonoid biosynthesis. Its function is as follows. Catalyzes the intramolecular cyclization of bicyclic chalcones into tricyclic (S)-flavanones. Responsible for the isomerization of 4,2',4',6'-tetrahydroxychalcone (also termed chalcone) into naringenin. The protein is Chalcone--flavanone isomerase (CHI) of Pyrus communis (Pear).